A 169-amino-acid polypeptide reads, in one-letter code: Large ribosomal subunit protein uL10 (169 aa).

Belongs to the universal ribosomal protein uL10 family. As to quaternary structure, part of the ribosomal stalk of the 50S ribosomal subunit. The N-terminus interacts with L11 and the large rRNA to form the base of the stalk. The C-terminus forms an elongated spine to which L12 dimers bind in a sequential fashion forming a multimeric L10(L12)X complex.

Forms part of the ribosomal stalk, playing a central role in the interaction of the ribosome with GTP-bound translation factors. The sequence is that of Large ribosomal subunit protein uL10 from Staphylococcus saprophyticus subsp. saprophyticus (strain ATCC 15305 / DSM 20229 / NCIMB 8711 / NCTC 7292 / S-41).